Here is a 569-residue protein sequence, read N- to C-terminus: MNTEILGVALQILLLLVISYPLGKHIAKVYKEGNDCMRFMAPIERFIYKLAGINPNEEMDWKAFLKSLLIINVFWFFWGMILLVSQGYLPLNPDGNSGQSPDLAFNTCISFMVNCNLQHYSGESGLTYFTQLFVIMLFQFITAATGMAAMAGIMKSMAAKTTKTIGNFWHYLVISCTRILFPMSLIVGFILIIQGTPMGFDSKMTIPTLEGAEQTVSQGPTAAIVPIKQLGTNGGGYFGVNSSHPLENPTYLTNIVECWSILIIPMALVFALGFYLKRKKLGYVIYGVMLFAYLLGVFCNVHYEMAGNPKIDEMGIDQSCGAMEGKETRLGPGATALWSVTTTVTSNGSVNGMHDSTMPLSGMVEMLNMQINTWFGGVGVGFMNYYAFLIIAVFISGLMVGRTPEFLGKKVEAREMKIATIVSLAHPFVILIFTAISSYVWVYAPEFVESEGGWLNNPGFHGFSEMLYEYTSSSANNGSGFEGLGDNTYFWNYTCGLALIISRYLPIVGQVAIAGLLANKKYTPESAGTLKTDTVTFGVMTFFVIVIVAALSFFPAQTLGPIAEYFSIY.

A run of 10 helical transmembrane segments spans residues 3–23, 64–84, 133–153, 179–199, 255–275, 281–301, 375–395, 421–441, 497–517, and 535–555; these read TEIL…YPLG, FLKS…ILLV, FVIM…MAGI, ILFP…TPMG, IVEC…LGFY, LGYV…FCNV, FGGV…AVFI, IVSL…SYVW, LALI…AGLL, and VTFG…SFFP.

This sequence belongs to the KdpA family. As to quaternary structure, the system is composed of three essential subunits: KdpA, KdpB and KdpC.

The protein resides in the cell inner membrane. Part of the high-affinity ATP-driven potassium transport (or Kdp) system, which catalyzes the hydrolysis of ATP coupled with the electrogenic transport of potassium into the cytoplasm. This subunit binds the periplasmic potassium ions and delivers the ions to the membrane domain of KdpB through an intramembrane tunnel. The sequence is that of Potassium-transporting ATPase potassium-binding subunit from Parabacteroides distasonis (strain ATCC 8503 / DSM 20701 / CIP 104284 / JCM 5825 / NCTC 11152).